The primary structure comprises 289 residues: Glucosamine-6-phosphate deaminase 1 (289 aa).

The active-site Proton acceptor; for enolization step is the Asp72. Asp141 serves as the catalytic For ring-opening step. The Proton acceptor; for ring-opening step role is filled by His143. Glu148 acts as the For ring-opening step in catalysis. Position 161 is a phosphothreonine (Thr161).

It belongs to the glucosamine/galactosamine-6-phosphate isomerase family. In terms of assembly, homohexamer. As to expression, widely expressed. Detected in brain, liver, kidney, muscle, ovary, testis, spermatids and spermatozoa. In spermatids, located close to the developing acrosome vesicle. In spermatozoa, found close to the acrosomal region.

It localises to the cytoplasm. The catalysed reaction is alpha-D-glucosamine 6-phosphate + H2O = beta-D-fructose 6-phosphate + NH4(+). The protein operates within nucleotide-sugar biosynthesis; UDP-N-acetyl-alpha-D-glucosamine biosynthesis; alpha-D-glucosamine 6-phosphate from D-fructose 6-phosphate: step 1/1. Its activity is regulated as follows. Allosterically activated by N-acetylglucosamine-6-phosphate (GlcNAc6P). Its function is as follows. Catalyzes the reversible conversion of alpha-D-glucosamine 6-phosphate (GlcN-6P) into beta-D-fructose 6-phosphate (Fru-6P) and ammonium ion, a regulatory reaction step in de novo uridine diphosphate-N-acetyl-alpha-D-glucosamine (UDP-GlcNAc) biosynthesis via hexosamine pathway. Deamination is coupled to aldo-keto isomerization mediating the metabolic flux from UDP-GlcNAc toward Fru-6P. At high ammonium level can drive amination and isomerization of Fru-6P toward hexosamines and UDP-GlcNAc synthesis. Has a role in fine tuning the metabolic fluctuations of cytosolic UDP-GlcNAc and their effects on hyaluronan synthesis that occur during tissue remodeling. Seems to trigger calcium oscillations in mammalian eggs. These oscillations serve as the essential trigger for egg activation and early development of the embryo. This is Glucosamine-6-phosphate deaminase 1 from Mus musculus (Mouse).